The following is a 464-amino-acid chain: Cell division protein FtsA (464 aa).

The segment at 392-464 is disordered; sequence EVIESDKDSE…FKKLMKSLFE (73 aa). Residues 416–455 show a composition bias toward basic and acidic residues; that stretch reads KKENDEVAPEAPREESYEDRENHLEDEQQTEGKAKEESKF.

The protein belongs to the FtsA/MreB family. Self-interacts. Interacts with FtsZ.

The protein localises to the cell membrane. Its function is as follows. Cell division protein that is involved in the assembly of the Z ring. May serve as a membrane anchor for the Z ring. This is Cell division protein FtsA from Staphylococcus epidermidis (strain ATCC 35984 / DSM 28319 / BCRC 17069 / CCUG 31568 / BM 3577 / RP62A).